We begin with the raw amino-acid sequence, 317 residues long: o-succinylbenzoate synthase (317 aa).

Residues 71 to 73 and K95 contribute to the 2-succinylbenzoate site; that span reads NAT. Residue K97 is the Proton donor of the active site. D128, E154, and D177 together coordinate Mg(2+). 128–130 serves as a coordination point for 2-succinylbenzoate; it reads DVN. 2-succinylbenzoate is bound at residue K201. K201 serves as the catalytic Proton acceptor.

The protein belongs to the mandelate racemase/muconate lactonizing enzyme family. MenC type 1 subfamily. In terms of assembly, monomer. A divalent metal cation is required as a cofactor.

The catalysed reaction is (1R,6R)-6-hydroxy-2-succinyl-cyclohexa-2,4-diene-1-carboxylate = 2-succinylbenzoate + H2O. It functions in the pathway quinol/quinone metabolism; 1,4-dihydroxy-2-naphthoate biosynthesis; 1,4-dihydroxy-2-naphthoate from chorismate: step 4/7. Its pathway is quinol/quinone metabolism; menaquinone biosynthesis. In terms of biological role, converts 2-succinyl-6-hydroxy-2,4-cyclohexadiene-1-carboxylate (SHCHC) to 2-succinylbenzoate (OSB). Does not show N-succinylamino acid racemase (NSAR) activity with N-succinyl-L-phenylglycine as substrate. The chain is o-succinylbenzoate synthase from Thermobifida fusca (strain YX).